The chain runs to 54 residues: UPF0181 protein APJL_0874 (54 aa).

It belongs to the UPF0181 family.

This Actinobacillus pleuropneumoniae serotype 3 (strain JL03) protein is UPF0181 protein APJL_0874.